The primary structure comprises 643 residues: Conglutin alpha 2 (643 aa).

The first 22 residues, 1 to 22, serve as a signal peptide directing secretion; the sequence is MAKPCLFSFSLCLLLLSSLCLA. Cystine bridges form between Cys-31–Cys-64 and Cys-107–Cys-464. The 226-residue stretch at 36–261 folds into the Cupin type-1 1 domain; sequence LNALEPDNRV…AFNVDEEIIN (226 aa). Disordered stretches follow at residues 110–142, 190–243, and 285–458; these read TYEEAQQSQSSQDPRRRSSRSQSQEQEQQDSHQ, PRRF…VLSG, and PKSQ…SRNG. Low complexity predominate over residues 207–218; sequence QEQQGQQREQQQ. Composition is skewed to basic and acidic residues over residues 228–237 and 298–313; these read HQQEQEEEGK and PRQRGQPERREERREE. The span at 314-323 shows a compositional bias: acidic residues; the sequence is EKEEEEEEDE. 2 stretches are compositionally biased toward basic and acidic residues: residues 324-333 and 357-369; these read PRSRERYERQ and QEGRGQQREWERT. The segment covering 422 to 433 has biased composition (basic residues); that stretch reads RGRHGGRGRRSG. Positions 470-616 constitute a Cupin type-1 2 domain; that stretch reads ENIAKPSRAD…AFGLRLNQVS (147 aa). A compositionally biased stretch (polar residues) spans 623–632; the sequence is NQGPLVSPQS. The segment at 623–643 is disordered; it reads NQGPLVSPQSESEDHTLPKVA. The segment covering 634-643 has biased composition (basic and acidic residues); the sequence is SEDHTLPKVA.

It belongs to the 11S seed storage protein (globulins) family. In terms of assembly, hexamer; each subunit is composed of an acidic and a basic chain derived from a single precursor and linked by a disulfide bond. Component of globulins complexes which accumulate in seeds.

Functionally, sulfur-rich seed storage protein. This protein found in the seeds of many leguminous and non-leguminous plants is the source of sulfur-containing amino acids in seed meals. In Lupinus angustifolius (Narrow-leaved blue lupine), this protein is Conglutin alpha 2.